The primary structure comprises 275 residues: Diaminopimelate epimerase (275 aa).

Residues N13, Q46, and N66 each coordinate substrate. C75 (proton donor) is an active-site residue. Substrate-binding positions include 76-77, N159, N192, and 210-211; these read GN and ER. C219 functions as the Proton acceptor in the catalytic mechanism. 220 to 221 is a substrate binding site; it reads GS.

The protein belongs to the diaminopimelate epimerase family. As to quaternary structure, homodimer.

The protein localises to the cytoplasm. It catalyses the reaction (2S,6S)-2,6-diaminopimelate = meso-2,6-diaminopimelate. The protein operates within amino-acid biosynthesis; L-lysine biosynthesis via DAP pathway; DL-2,6-diaminopimelate from LL-2,6-diaminopimelate: step 1/1. Functionally, catalyzes the stereoinversion of LL-2,6-diaminopimelate (L,L-DAP) to meso-diaminopimelate (meso-DAP), a precursor of L-lysine and an essential component of the bacterial peptidoglycan. This is Diaminopimelate epimerase from Idiomarina loihiensis (strain ATCC BAA-735 / DSM 15497 / L2-TR).